The primary structure comprises 211 residues: N-(5'-phosphoribosyl)anthranilate isomerase (211 aa).

It belongs to the TrpF family.

It carries out the reaction N-(5-phospho-beta-D-ribosyl)anthranilate = 1-(2-carboxyphenylamino)-1-deoxy-D-ribulose 5-phosphate. It participates in amino-acid biosynthesis; L-tryptophan biosynthesis; L-tryptophan from chorismate: step 3/5. This chain is N-(5'-phosphoribosyl)anthranilate isomerase, found in Hyphomonas neptunium (strain ATCC 15444).